A 390-amino-acid chain; its full sequence is Heparan sulfate glucosamine 3-O-sulfotransferase 3B1 (390 aa).

Residues 1–25 form a disordered region; that stretch reads MGQRLSGGRSCLDVPGRLLPQPPPP. Over 1–32 the chain is Cytoplasmic; it reads MGQRLSGGRSCLDVPGRLLPQPPPPPPPVRRK. The helical; Signal-anchor for type II membrane protein transmembrane segment at 33-53 threads the bilayer; it reads LALLFAMLCVWLYMFLYSCAG. Residues 54–390 lie on the Lumenal side of the membrane; that stretch reads SCAAAPGLLL…QMTGHDFGWD (337 aa). Positions 74–133 are disordered; the sequence is PPALATAPDGTPPRLPFRAPPATPLASGKEMAEGAASPEEQSPEVPDSPSPISSFFSGSG. Residues 83 to 96 are compositionally biased toward pro residues; it reads GTPPRLPFRAPPAT. Residues 123–133 show a composition bias toward low complexity; it reads SPISSFFSGSG. 147 to 151 serves as a coordination point for 3'-phosphoadenylyl sulfate; that stretch reads KGGTR. Residues 169-175 and 200-203 contribute to the substrate site; these read EPHFFDR and KTPS. 3'-phosphoadenylyl sulfate-binding residues include Arg-228 and Ser-236. Residue Asn-258 is glycosylated (N-linked (GlcNAc...) asparagine). Residue 268–269 coordinates substrate; sequence WS. Asn-329 carries N-linked (GlcNAc...) asparagine glycosylation. A disulfide bridge links Cys-336 with Cys-348. 353–357 lines the 3'-phosphoadenylyl sulfate pocket; it reads KGRTH.

It belongs to the sulfotransferase 1 family. In terms of tissue distribution, ubiquitous. Most abundant in liver and placenta, followed by heart and kidney.

It localises to the golgi apparatus membrane. The catalysed reaction is alpha-D-glucosaminyl-[heparan sulfate](n) + 3'-phosphoadenylyl sulfate = 3-sulfo-alpha-D-glucosaminyl-[heparan sulfate](n) + adenosine 3',5'-bisphosphate + H(+). In terms of biological role, sulfotransferase that utilizes 3'-phospho-5'-adenylyl sulfate (PAPS) to catalyze the transfer of a sulfo group to an N-unsubstituted glucosamine linked to a 2-O-sulfo iduronic acid unit on heparan sulfate. Catalyzes the O-sulfation of glucosamine in IdoUA2S-GlcNS and also in IdoUA2S-GlcNH2. The substrate-specific O-sulfation generates an enzyme-modified heparan sulfate which acts as a binding receptor to Herpes simplex virus-1 (HSV-1) and permits its entry. Unlike HS3ST1/3-OST-1, does not convert non-anticoagulant heparan sulfate to anticoagulant heparan sulfate. In Homo sapiens (Human), this protein is Heparan sulfate glucosamine 3-O-sulfotransferase 3B1 (HS3ST3B1).